Reading from the N-terminus, the 461-residue chain is Steroidogenic factor 1 (461 aa).

Positions Asp-10 to Ala-85 form a DNA-binding region, nuclear receptor. The NR C4-type zinc finger occupies Cys-13 to Cys-33. Lys-34, Lys-38, and Lys-72 each carry N6-acetyllysine. An NR C4-type zinc finger spans residues Cys-49 to Cys-73. The tract at residues Asn-116–Ala-158 is disordered. Lys-119 is covalently cross-linked (Glycyl lysine isopeptide (Lys-Gly) (interchain with G-Cter in SUMO)). Positions Val-126–Tyr-138 are enriched in pro residues. Lys-194 participates in a covalent cross-link: Glycyl lysine isopeptide (Lys-Gly) (interchain with G-Cter in SUMO). Position 203 is a phosphoserine; by CDK7 (Ser-203). The NR LBD domain occupies Gly-222 to Lys-459. Residues Leu-230–Thr-461 are important for dimerization. Positions 341, 436, and 440 each coordinate a 1,2-diacyl-sn-glycero-3-phosphocholine.

This sequence belongs to the nuclear hormone receptor family. NR5 subfamily. As to quaternary structure, binds DNA as a monomer. Part of a complex consisting of SFPQ, NONO and NR5A1. Interacts with NR0B2. Interacts with DGKQ and CDK7. Binds to and activated by HIPK3. In terms of processing, may be regulated by phosphorylation and dephosphorylation. Acetylation stimulates the transcriptional activity. Post-translationally, sumoylation reduces CDK7-mediated phosphorylation on Ser-203. In terms of processing, phosphorylated on Ser-203 by CDK7. This phosphorylation promotes transcriptional activity. As to expression, adrenal, ovary, testis, placenta, adipocyte, and brain.

Its subcellular location is the nucleus. In terms of biological role, transcriptional activator. Seems to be essential for sexual differentiation and formation of the primary steroidogenic tissues. Binds to the Ad4 site found in the promoter region of steroidogenic P450 genes such as CYP11A, CYP11B and CYP21B. Also regulates the AMH/Muellerian inhibiting substance gene as well as the AHCH and STAR genes. 5'-YCAAGGYC-3' and 5'-RRAGGTCA-3' are the consensus sequences for the recognition by NR5A1. The SFPQ-NONO-NR5A1 complex binds to the CYP17 promoter and regulates basal and cAMP-dependent transcriptional activity. Binds phospholipids with a phosphatidylinositol (PI) headgroup, in particular PI(3,4)P2 and PI(3,4,5)P3. Activated by the phosphorylation of NR5A1 by HIPK3 leading to increased steroidogenic gene expression upon cAMP signaling pathway stimulation. The chain is Steroidogenic factor 1 (NR5A1) from Bos taurus (Bovine).